Here is a 299-residue protein sequence, read N- to C-terminus: Streptogrisin-B (299 aa).

The N-terminal stretch at 1–38 (MRIKRTSNRSNAARRVRTTAVLAGLAAVAALAVPTANA) is a signal peptide. A propeptide spanning residues 39 to 114 (ETPRTFSANQ…ERTPGKFTKL (76 aa)) is cleaved from the precursor. Cys-128 and Cys-148 form a disulfide bridge. Active-site charge relay system residues include His-147, Asp-177, and Ser-255. Cys-249 and Cys-276 are oxidised to a cystine.

This sequence belongs to the peptidase S1 family. In terms of assembly, monomer.

The enzyme catalyses Hydrolysis of proteins with trypsin-like specificity.. In terms of biological role, has a primary specificity for large aliphatic or aromatic amino acids. The protein is Streptogrisin-B (sprB) of Streptomyces griseus.